Consider the following 328-residue polypeptide: tRNA uridine(34) hydroxylase (328 aa).

The Rhodanese domain occupies 130 to 224 (LDKDTVVLDT…YGKDPEVQGE (95 aa)). The active-site Cysteine persulfide intermediate is cysteine 184.

It belongs to the TrhO family.

The catalysed reaction is uridine(34) in tRNA + AH2 + O2 = 5-hydroxyuridine(34) in tRNA + A + H2O. Functionally, catalyzes oxygen-dependent 5-hydroxyuridine (ho5U) modification at position 34 in tRNAs. The protein is tRNA uridine(34) hydroxylase of Streptococcus pneumoniae (strain ATCC 700669 / Spain 23F-1).